The chain runs to 461 residues: Piperine synthase (461 aa).

Residues His168 and Asp387 each act as proton acceptor in the active site. The Microbody targeting signal signature appears at 459–461; sequence SRM.

It belongs to the plant acyltransferase family. As to quaternary structure, monomer. Confined to immature fruits perisperm. Also detectable in roots.

Its subcellular location is the cytoplasm. The enzyme catalyses piperidine + (E,E)-piperoyl-CoA = piperine + CoA + H(+). It carries out the reaction pyrrolidine + (E,E)-piperoyl-CoA = piperyline + CoA + H(+). The catalysed reaction is (E,E)-piperoyl-CoA + 2-methylpropan-1-amine = (E,E)-piperlonguminine + CoA + H(+). It functions in the pathway aromatic compound metabolism. Its function is as follows. Involved in the biosynthesis of aromatic piperamides natural products such as piperine (1-piperoyl-piperidine), the pungent principle contributing, together with several terpenoids, to the aromatic properties of black pepper fruits, and displaying numerous pharmacological activities such as antiproliferative, antitumor, antiangiogenesis, antioxidant, antidiabetic, antiobesity, cardioprotective, antimicrobial, antiaging, and immunomodulatory effects. Mediates mainly the conversion of piperidine and piperoyl-CoA to piperine. Can also use pyrrolidine and isobutylamine as acceptors and 3,4-methylenedioxycinnamoyl-CoA as an alternative CoA-donor with a lower efficiency. This is Piperine synthase from Piper nigrum (Black pepper).